A 302-amino-acid chain; its full sequence is Urease accessory protein UreD 2 (302 aa).

The protein belongs to the UreD family. In terms of assembly, ureD, UreF and UreG form a complex that acts as a GTP-hydrolysis-dependent molecular chaperone, activating the urease apoprotein by helping to assemble the nickel containing metallocenter of UreC. The UreE protein probably delivers the nickel.

The protein resides in the cytoplasm. Required for maturation of urease via the functional incorporation of the urease nickel metallocenter. The sequence is that of Urease accessory protein UreD 2 from Brucella melitensis biotype 1 (strain ATCC 23456 / CCUG 17765 / NCTC 10094 / 16M).